The primary structure comprises 200 residues: Phospholipase A2 inhibitor LNF1 (200 aa).

The N-terminal stretch at 1 to 19 (MKYLHTICLLFIFVARGNS) is a signal peptide. Intrachain disulfides connect Cys22-Cys46, Cys25-Cys32, Cys39-Cys67, Cys73-Cys94, Cys95-Cys100, Cys118-Cys143, Cys136-Cys165, and Cys169-Cys191. A glycan (N-linked (GlcNAc...) asparagine) is linked at Asn176.

The protein belongs to the CNF-like-inhibitor family. In terms of assembly, occurs as a mixture of oligomers. Tetrameric arrangement appears to be the predominant quaternary structure. Expressed by the liver.

It localises to the secreted. Its function is as follows. Inhibits the enzymatic activity of phospholipase A2 (PA2). The polypeptide is Phospholipase A2 inhibitor LNF1 (Lachesis muta muta (Bushmaster)).